Consider the following 193-residue polypeptide: MRLTDIEIEQALDNGTIVIEPRPGIEAISGVSVDVRLGGQFRVFKDHTAPYIDLSGPSVEMQAALDRVMSEIIEIPDGEAFFLHPGELALAVTYESVTLPADIVGWLDGRSSLARLGLMVHVTAHRIDPGWQGKIVLEFYNSGKLPLALRPRMTIGALNFERLNHAVARPYNTRKSAKYKDQQEAVASRISQD.

DCTP contacts are provided by residues Arg110–Arg115, Asp128, Val136–Glu138, Tyr171, Lys178, and Gln182. The Proton donor/acceptor role is filled by Glu138. Residues Arg174–Asp193 are disordered.

Belongs to the dCTP deaminase family. In terms of assembly, homotrimer.

The enzyme catalyses dCTP + H2O + H(+) = dUTP + NH4(+). It functions in the pathway pyrimidine metabolism; dUMP biosynthesis; dUMP from dCTP (dUTP route): step 1/2. Its function is as follows. Catalyzes the deamination of dCTP to dUTP. This is dCTP deaminase from Shewanella baltica (strain OS223).